Reading from the N-terminus, the 131-residue chain is Ribonuclease VapC13 (131 aa).

The PINc domain maps to 2-128 (ILVDSNIPMY…RGFDSYPGIK (127 aa)). 2 residues coordinate Mg(2+): Asp-5 and Asp-99.

This sequence belongs to the PINc/VapC protein family. It depends on Mg(2+) as a cofactor.

Its subcellular location is the secreted. Functionally, toxic component of a type II toxin-antitoxin (TA) system. An RNase. The cognate antitoxin is VapB13. The sequence is that of Ribonuclease VapC13 from Mycobacterium tuberculosis (strain ATCC 25618 / H37Rv).